A 120-amino-acid polypeptide reads, in one-letter code: Large ribosomal subunit protein uL22 (120 aa).

This sequence belongs to the universal ribosomal protein uL22 family. In terms of assembly, part of the 50S ribosomal subunit.

In terms of biological role, this protein binds specifically to 23S rRNA; its binding is stimulated by other ribosomal proteins, e.g. L4, L17, and L20. It is important during the early stages of 50S assembly. It makes multiple contacts with different domains of the 23S rRNA in the assembled 50S subunit and ribosome. Functionally, the globular domain of the protein is located near the polypeptide exit tunnel on the outside of the subunit, while an extended beta-hairpin is found that lines the wall of the exit tunnel in the center of the 70S ribosome. In Acaryochloris marina (strain MBIC 11017), this protein is Large ribosomal subunit protein uL22.